Consider the following 420-residue polypeptide: Reticulon-4 receptor-like 2 (420 aa).

The signal sequence occupies residues 1–46; that stretch reads MLPGLRRLLQAPASACLLLMLLALPLAAPSCPMLCTCYSSPPTVSC. 2 disulfides stabilise this stretch: Cys-31–Cys-37 and Cys-35–Cys-46. An LRRNT domain is found at 47–60; the sequence is QANNFSSVPLSLPP. Asn-50 is a glycosylation site (N-linked (GlcNAc...) asparagine). LRR repeat units lie at residues 61–82, 83–104, 107–129, 132–153, 156–177, 180–201, 204–225, and 228–249; these read STQR…TFGS, NLLT…TFRH, ALEE…TFQG, RLQS…IFRG, SLQY…LFAD, NLSH…VFRG, SLDR…AFRG, and RLTI…ALAD. The N-linked (GlcNAc...) asparagine glycan is linked to Asn-93. The N-linked (GlcNAc...) asparagine glycan is linked to Asn-236. Positions 261-312 constitute an LRRCT domain; the sequence is NPWACDCRARPLWAWFQRARVSSSDVTCATPPERQGRDLRALREADFQACPP. Disulfide bonds link Cys-265/Cys-288 and Cys-267/Cys-310. Residues 308–399 form a disordered region; the sequence is QACPPAAPTR…CQAPPDSRGP (92 aa). The tract at residues 315–327 is important for interaction with MAG; it reads PTRPGSRARGNSS. The span at 351 to 360 shows a compositional bias: basic and acidic residues; it reads LPAEDSRGRQ. Cys-390 is lipidated: GPI-anchor amidated cysteine. A propeptide spans 391-420 (removed in mature form); that stretch reads QAPPDSRGPALSAGLPSPLLCLLLLVPHHL.

The protein belongs to the Nogo receptor family. Interaction with MAG is controversial, and may be indirect. Does not interact with MAG, OMG and RTN4. Interacts with MAG. Post-translationally, undergoes zinc metalloproteinase-mediated ectodomain shedding in neuroblastoma cells; is released both as a full-length ectodomain and an N-terminal fragment containing the leucine-rich repeat (LRR) region of the protein. In terms of processing, N-glycosylated. Highly expressed in brain and liver. Expressed at lower levels in kidney, mammary gland, placenta, skeletal muscle, spleen and thyroid.

It is found in the cell membrane. It localises to the membrane raft. The protein resides in the cell projection. Its subcellular location is the dendrite. The protein localises to the perikaryon. It is found in the axon. Functionally, cell surface receptor that plays a functionally redundant role in the inhibition of neurite outgrowth mediated by MAG. Plays a functionally redundant role in postnatal brain development. Contributes to normal axon migration across the brain midline and normal formation of the corpus callosum. Does not seem to play a significant role in regulating axon regeneration in the adult central nervous system. Protects motoneurons against apoptosis; protection against apoptosis is probably mediated by MAG. Like other family members, plays a role in restricting the number dendritic spines and the number of synapses that are formed during brain development. Signaling mediates activation of Rho and downstream reorganization of the actin cytoskeleton. This Homo sapiens (Human) protein is Reticulon-4 receptor-like 2.